The following is a 128-amino-acid chain: Adrenodoxin (128 aa).

S3 is subject to Phosphoserine. At K6 the chain carries N6-acetyllysine; alternate. Position 6 is an N6-succinyllysine; alternate (K6). The 2Fe-2S ferredoxin-type domain maps to 7–111 (VTVNFINRDG…NMTVRVPDAV (105 aa)). [2Fe-2S] cluster contacts are provided by C46, C52, C55, and C92. An N6-succinyllysine modification is found at K98. At S117 the chain carries Phosphoserine.

The protein belongs to the adrenodoxin/putidaredoxin family. As to quaternary structure, interacts with CYP11A1. [2Fe-2S] cluster serves as cofactor.

Its subcellular location is the mitochondrion matrix. Functionally, essential for the synthesis of various steroid hormones. Participates in the reduction of mitochondrial cytochrome P450 for steroidogenesis. Transfers electrons from adrenodoxin reductase to CYP11A1, a cytochrome P450 that catalyzes cholesterol side-chain cleavage. Does not form a ternary complex with adrenodoxin reductase and CYP11A1 but shuttles between the two enzymes to transfer electrons. The chain is Adrenodoxin (FDX1) from Ovis aries (Sheep).